A 40-amino-acid polypeptide reads, in one-letter code: Amyloid-beta precursor protein (40 aa).

Belongs to the APP family. In terms of assembly, binds, via its C-terminus, to the PID domain of several cytoplasmic proteins, including APBB family members, the APBA family, MAPK8IP1, SHC1 and NUMB and DAB1. Binding to DAB1 inhibits its serine phosphorylation. Interacts (via NPXY motif) with DAB2 (via PID domain); the interaction is impaired by tyrosine phosphorylation of the NPXY motif. Also interacts with GPCR-like protein BPP, APPBP1, IB1, KNS2 (via its TPR domains), APPBP2 (via BaSS) and DDB1. In vitro, it binds MAPT via the MT-binding domains. Associates with microtubules in the presence of ATP and in a kinesin-dependent manner. Interacts, through a C-terminal domain, with GNAO1. Interacts with CPEB1, ANKS1B and AGER. Interacts with ITM2B. Interacts with ITM2C. Interacts with IDE. Can form homodimers; dimerization is enhanced in the presence of Cu(2+) ions. Can form homodimers; this is promoted by heparin binding. Interacts with SORL1 (via N-terminal ectodomain); this interaction retains APP in the trans-Golgi network and reduces processing into soluble APP-alpha and amyloid-beta peptides. Interacts with PLD3. Interacts with VDAC1. Interacts with NSG1; could regulate APP processing. Interacts with LRRK2. Interacts (via cytoplasmic domain) with KIF5B. Interacts (via C-terminus) with APBB2/FE65L1 (via C-terminus). Interacts (via intracellular domain) with APBB3. In terms of processing, proteolytically processed under normal cellular conditions. Cleavage either by alpha-secretase, beta-secretase or theta-secretase leads to generation and extracellular release of soluble APP peptides, S-APP-alpha and S-APP-beta, and the retention of corresponding membrane-anchored C-terminal fragments, C80, C83 and C99. Subsequent processing of C80 and C83 by gamma-secretase yields P3 peptides. This is the major secretory pathway and is non-amyloidogenic. Alternatively, presenilin/nicastrin-mediated gamma-secretase processing of C99 releases the amyloid-beta proteins, amyloid-beta protein 40 and amyloid-beta protein 42, major components of amyloid plaques, and the cytotoxic C-terminal fragments, gamma-CTF(50), gamma-CTF(57) and gamma-CTF(59). PSEN1 cleavage is more efficient with C83 than with C99 as substrate (in vitro). Amyloid-beta protein 40 and Amyloid-beta protein 42 are cleaved by ACE. Many other minor amyloid-beta peptides, amyloid-beta 1-X peptides, are found in cerebral spinal fluid (CSF) including the amyloid-beta X-15 peptides, produced from the cleavage by alpha-secretase.

It localises to the cell membrane. Its subcellular location is the membrane. The protein localises to the perikaryon. It is found in the cell projection. The protein resides in the growth cone. It localises to the clathrin-coated pit. Its subcellular location is the early endosome. The protein localises to the cytoplasmic vesicle. Functions as a cell surface receptor and performs physiological functions on the surface of neurons relevant to neurite growth, neuronal adhesion and axonogenesis. Interaction between APP molecules on neighboring cells promotes synaptogenesis. Involved in cell mobility and transcription regulation through protein-protein interactions. Can promote transcription activation through binding to APBB1-KAT5 and inhibit Notch signaling through interaction with Numb. Couples to apoptosis-inducing pathways such as those mediated by G(o) and JIP. Inhibits G(o)-alpha ATPase activity. Acts as a kinesin I membrane receptor, mediating the axonal transport of beta-secretase and presenilin 1. May be involved in copper homeostasis/oxidative stress through copper ion reduction. In vitro, copper-metallated APP induces neuronal death directly or is potentiated through Cu(2+)-mediated low-density lipoprotein oxidation. Can regulate neurite outgrowth through binding to components of the extracellular matrix such as heparin and collagen I and IV. Induces a AGER-dependent pathway that involves activation of p38 MAPK, resulting in internalization of amyloid-beta peptide and mitochondrial dysfunction in cultured cortical neurons. Provides Cu(2+) ions for GPC1 which are required for release of nitric oxide (NO) and subsequent degradation of the heparan sulfate chains on GPC1. The polypeptide is Amyloid-beta precursor protein (Felis catus (Cat)).